Here is a 1077-residue protein sequence, read N- to C-terminus: ATP-dependent DNA helicase MPH1 (1077 aa).

The Helicase ATP-binding domain occupies 99-266 (IVHRALFENV…EVVDNLQISK (168 aa)). 112–119 (IPTGMGKT) contributes to the ATP binding site. The short motif at 214 to 217 (DEAH) is the DEAH box element. Residues 511-660 (KKVDRIRRLE…SLNYKVTDRI (150 aa)) enclose the Helicase C-terminal domain. Disordered regions lie at residues 536–556 (EKLA…ISGM) and 831–859 (TLSS…PKRQ). Over residues 831–841 (TLSSDNKSTPD) the composition is skewed to polar residues.

It belongs to the DEAD box helicase family. DEAH subfamily. FANCM sub-subfamily. Interacts with the MHF histone-fold complex to form the FANCM-MHF complex.

It is found in the nucleus. The catalysed reaction is ATP + H2O = ADP + phosphate + H(+). Functionally, ATP-dependent DNA helicase involved in DNA damage repair by homologous recombination and in genome maintenance. Capable of unwinding D-loops. Plays a role in limiting crossover recombinants during mitotic DNA double-strand break (DSB) repair. Component of a FANCM-MHF complex which promotes gene conversion at blocked replication forks, probably by reversal of the stalled fork. This Eremothecium gossypii (strain ATCC 10895 / CBS 109.51 / FGSC 9923 / NRRL Y-1056) (Yeast) protein is ATP-dependent DNA helicase MPH1.